Consider the following 285-residue polypeptide: Bifunctional protein FolD (285 aa).

NADP(+) contacts are provided by residues 165–167 (GRS) and S190.

Belongs to the tetrahydrofolate dehydrogenase/cyclohydrolase family. In terms of assembly, homodimer.

It carries out the reaction (6R)-5,10-methylene-5,6,7,8-tetrahydrofolate + NADP(+) = (6R)-5,10-methenyltetrahydrofolate + NADPH. It catalyses the reaction (6R)-5,10-methenyltetrahydrofolate + H2O = (6R)-10-formyltetrahydrofolate + H(+). It participates in one-carbon metabolism; tetrahydrofolate interconversion. In terms of biological role, catalyzes the oxidation of 5,10-methylenetetrahydrofolate to 5,10-methenyltetrahydrofolate and then the hydrolysis of 5,10-methenyltetrahydrofolate to 10-formyltetrahydrofolate. The chain is Bifunctional protein FolD from Burkholderia mallei (strain NCTC 10247).